The following is a 265-amino-acid chain: Isoprenyl transferase (265 aa).

The active site involves Asp35. Asp35 serves as a coordination point for Mg(2+). Residues 36 to 39 (GNGR), Trp40, Arg48, His52, and 80 to 82 (STE) each bind substrate. The active-site Proton acceptor is the Asn83. Substrate is bound by residues Trp84, Arg86, Arg203, and 209-211 (RIS). Glu222 contacts Mg(2+).

It belongs to the UPP synthase family. As to quaternary structure, homodimer. Requires Mg(2+) as cofactor.

In terms of biological role, catalyzes the condensation of isopentenyl diphosphate (IPP) with allylic pyrophosphates generating different type of terpenoids. The sequence is that of Isoprenyl transferase from Prochlorococcus marinus (strain MIT 9313).